Reading from the N-terminus, the 107-residue chain is Anaphase-promoting complex subunit 14 (107 aa).

The APC/C is composed of at least 13 subunits: apc1, apc2, nuc2, apc4, apc5, cut9, apc8, apc10, apc11, hcn1, apc13, apc14 and apc15.

It is found in the ascus epiplasm. Functionally, component of the anaphase promoting complex/cyclosome (APC/C), a cell cycle-regulated E3 ubiquitin-protein ligase complex that controls progression through mitosis and the G1 phase of the cell cycle. The APC/C is thought to confer substrate specificity and, in the presence of ubiquitin-conjugating E2 enzymes, it catalyzes the formation of protein-ubiquitin conjugates that are subsequently degraded by the 26S proteasome. Appears to play a role in spore wall formation. This is Anaphase-promoting complex subunit 14 from Schizosaccharomyces pombe (strain 972 / ATCC 24843) (Fission yeast).